We begin with the raw amino-acid sequence, 310 residues long: Upstream stimulatory factor 1 (310 aa).

Positions 1–17 (MKGQQKTAETEEGTVQI) are enriched in polar residues. 2 disordered regions span residues 1-26 (MKGQ…ATGE) and 171-209 (QGGS…EVER). A compositionally biased stretch (basic and acidic residues) spans 190 to 209 (EAPRTTRDEKRRAQHNEVER). The bHLH domain maps to 199-254 (KRRAQHNEVERRRRDKINNWIVQLSKIIPDCSMESTKSGQSKGGILSKACDYIQEL). The leucine-zipper stretch occupies residues 271 to 292 (LQLDNDVLRQQVEDLKNKNLLL). Lysine 306 participates in a covalent cross-link: Glycyl lysine isopeptide (Lys-Gly) (interchain with G-Cter in SUMO2).

Efficient DNA binding requires dimerization with another bHLH protein. Binds DNA as a homodimer or a heterodimer (USF1/USF2).

The protein resides in the nucleus. Transcription factor that binds to a symmetrical DNA sequence (E-boxes) (5'-CACGTG-3') that is found in a variety of viral and cellular promoters. The chain is Upstream stimulatory factor 1 (Usf1) from Mus musculus (Mouse).